The primary structure comprises 475 residues: Sulfate adenylyltransferase subunit 1 (475 aa).

The tr-type G domain occupies 25–239 (KSLLRFLTCG…EVLETVEIQR (215 aa)). A G1 region spans residues 34-41 (GSVDDGKS). 34 to 41 (GSVDDGKS) contacts GTP. The segment at 92–96 (GITID) is G2. Residues 113–116 (DTPG) are G3. GTP-binding positions include 113-117 (DTPGH) and 168-171 (NKMD). Residues 168–171 (NKMD) form a G4 region. The G5 stretch occupies residues 206–208 (SAL).

This sequence belongs to the TRAFAC class translation factor GTPase superfamily. Classic translation factor GTPase family. CysN/NodQ subfamily. As to quaternary structure, heterodimer composed of CysD, the smaller subunit, and CysN.

The catalysed reaction is sulfate + ATP + H(+) = adenosine 5'-phosphosulfate + diphosphate. It participates in sulfur metabolism; hydrogen sulfide biosynthesis; sulfite from sulfate: step 1/3. With CysD forms the ATP sulfurylase (ATPS) that catalyzes the adenylation of sulfate producing adenosine 5'-phosphosulfate (APS) and diphosphate, the first enzymatic step in sulfur assimilation pathway. APS synthesis involves the formation of a high-energy phosphoric-sulfuric acid anhydride bond driven by GTP hydrolysis by CysN coupled to ATP hydrolysis by CysD. The protein is Sulfate adenylyltransferase subunit 1 of Escherichia coli O127:H6 (strain E2348/69 / EPEC).